A 573-amino-acid polypeptide reads, in one-letter code: Urease subunit alpha 2 (573 aa).

Residues 136–573 enclose the Urease domain; sequence GAIDAHVHLI…LPMAQRYFLF (438 aa). The Ni(2+) site is built by histidine 141, histidine 143, and lysine 224. Lysine 224 bears the N6-carboxylysine mark. Histidine 226 contributes to the substrate binding site. Ni(2+) contacts are provided by histidine 253 and histidine 279. Histidine 327 serves as the catalytic Proton donor. Aspartate 367 lines the Ni(2+) pocket.

The protein belongs to the metallo-dependent hydrolases superfamily. Urease alpha subunit family. As to quaternary structure, may form a heterohexamer of 3 UreC (alpha) and 3 UreAB (gamma/beta) subunits. May also form a heterotrimer of UreA (gamma), UreB (beta) and UreC (alpha) subunits. Three heterotrimers associate to form the active enzyme. The cofactor is Ni cation. In terms of processing, carboxylation allows a single lysine to coordinate two nickel ions.

The protein localises to the cytoplasm. The enzyme catalyses urea + 2 H2O + H(+) = hydrogencarbonate + 2 NH4(+). The protein operates within nitrogen metabolism; urea degradation; CO(2) and NH(3) from urea (urease route): step 1/1. The chain is Urease subunit alpha 2 from Streptomyces avermitilis (strain ATCC 31267 / DSM 46492 / JCM 5070 / NBRC 14893 / NCIMB 12804 / NRRL 8165 / MA-4680).